Here is a 185-residue protein sequence, read N- to C-terminus: MDNLWTSLPLPGLSDDQRHWLFAPGSLTLRLKALGRFSLEVTQQRIDFPEPGEAHALGCTTDSPAWIREVALKIDDQVMVCARSLTPMRERRPAWPELAGYGGEPLGSMLYNTPDIHRGAFECQRPQADDPLSRLATSLGQPSGKLLARRSRFLRDGQPLLIAECFVEGFWALLQERSAPLKLAI.

R68, L106, and E164 together coordinate substrate.

Belongs to the UbiC family.

It localises to the cytoplasm. It catalyses the reaction chorismate = 4-hydroxybenzoate + pyruvate. Its pathway is cofactor biosynthesis; ubiquinone biosynthesis. Its function is as follows. Removes the pyruvyl group from chorismate, with concomitant aromatization of the ring, to provide 4-hydroxybenzoate (4HB) for the ubiquinone pathway. The protein is Probable chorismate pyruvate-lyase 1 of Pseudomonas entomophila (strain L48).